A 93-amino-acid chain; its full sequence is CRISPR-associated endoribonuclease Cas2 (93 aa).

Position 8 (Asp8) interacts with Mg(2+).

The protein belongs to the CRISPR-associated endoribonuclease Cas2 protein family. Homodimer, forms a heterotetramer with a Cas1 homodimer. Mg(2+) is required as a cofactor.

Functionally, CRISPR (clustered regularly interspaced short palindromic repeat), is an adaptive immune system that provides protection against mobile genetic elements (viruses, transposable elements and conjugative plasmids). CRISPR clusters contain sequences complementary to antecedent mobile elements and target invading nucleic acids. CRISPR clusters are transcribed and processed into CRISPR RNA (crRNA). Functions as a ssRNA-specific endoribonuclease. Involved in the integration of spacer DNA into the CRISPR cassette. In Thermofilum pendens (strain DSM 2475 / Hrk 5), this protein is CRISPR-associated endoribonuclease Cas2.